The sequence spans 168 residues: Photosystem I assembly protein Ycf3 (168 aa).

3 TPR repeats span residues 35–68 (AFTY…EIDP), 72–105 (SYIL…NSFL), and 120–153 (GEQA…TPGN).

The protein belongs to the Ycf3 family.

It is found in the plastid. It localises to the chloroplast thylakoid membrane. Its function is as follows. Essential for the assembly of the photosystem I (PSI) complex. May act as a chaperone-like factor to guide the assembly of the PSI subunits. The sequence is that of Photosystem I assembly protein Ycf3 from Jasminum nudiflorum (Winter jasmine).